Consider the following 455-residue polypeptide: ATP-dependent protease ATPase subunit HslU (455 aa).

Residues isoleucine 19, 61–66 (GVGKTE), aspartate 268, glutamate 333, and arginine 405 contribute to the ATP site.

Belongs to the ClpX chaperone family. HslU subfamily. As to quaternary structure, a double ring-shaped homohexamer of HslV is capped on each side by a ring-shaped HslU homohexamer. The assembly of the HslU/HslV complex is dependent on binding of ATP.

It is found in the cytoplasm. ATPase subunit of a proteasome-like degradation complex; this subunit has chaperone activity. The binding of ATP and its subsequent hydrolysis by HslU are essential for unfolding of protein substrates subsequently hydrolyzed by HslV. HslU recognizes the N-terminal part of its protein substrates and unfolds these before they are guided to HslV for hydrolysis. This is ATP-dependent protease ATPase subunit HslU from Francisella philomiragia subsp. philomiragia (strain ATCC 25017 / CCUG 19701 / FSC 153 / O#319-036).